We begin with the raw amino-acid sequence, 179 residues long: Large ribosomal subunit protein uL6 (179 aa).

Belongs to the universal ribosomal protein uL6 family. In terms of assembly, part of the 50S ribosomal subunit.

In terms of biological role, this protein binds to the 23S rRNA, and is important in its secondary structure. It is located near the subunit interface in the base of the L7/L12 stalk, and near the tRNA binding site of the peptidyltransferase center. The polypeptide is Large ribosomal subunit protein uL6 (Alkaliphilus oremlandii (strain OhILAs) (Clostridium oremlandii (strain OhILAs))).